We begin with the raw amino-acid sequence, 474 residues long: Cytochrome c-552 (474 aa).

A signal peptide spans 1-29 (MSIKHWMASSVSVTALVMTALLNITAVSA). Residue His-91 participates in heme c binding. Cys-119, Cys-122, and Lys-123 together coordinate heme. Heme c contacts are provided by Cys-157, Cys-160, His-161, Cys-206, Cys-209, and His-210. Residues Glu-212, Tyr-213, Lys-258, and Gln-260 each contribute to the Ca(2+) site. Tyr-213 is a substrate binding site. Residue His-261 coordinates substrate. Positions 272, 279, 282, 283, 298, 311, 314, 315, and 390 each coordinate heme c.

The protein belongs to the cytochrome c-552 family. Ca(2+) serves as cofactor. Heme c is required as a cofactor.

It is found in the periplasm. The enzyme catalyses 6 Fe(III)-[cytochrome c] + NH4(+) + 2 H2O = 6 Fe(II)-[cytochrome c] + nitrite + 8 H(+). Its pathway is nitrogen metabolism; nitrate reduction (assimilation). In terms of biological role, catalyzes the reduction of nitrite to ammonia, consuming six electrons in the process. In Vibrio vulnificus (strain CMCP6), this protein is Cytochrome c-552.